A 159-amino-acid chain; its full sequence is uncharacterized protein (159 aa).

This is an uncharacterized protein from Caenorhabditis elegans.